Consider the following 61-residue polypeptide: Putative antitoxin VapB13 (61 aa).

The protein belongs to the UPF0165 family.

In terms of biological role, possibly the antitoxin component of a type II toxin-antitoxin (TA) system. Its cognate toxin is VapC13 (Potential). The protein is Putative antitoxin VapB13 (vapB13) of Archaeoglobus fulgidus (strain ATCC 49558 / DSM 4304 / JCM 9628 / NBRC 100126 / VC-16).